The following is a 101-amino-acid chain: Gamma-secretase subunit PEN-2 (101 aa).

Residues 1 to 17 (MNLERVSNEEKLNLCRK) lie on the Cytoplasmic side of the membrane. Residues 18–36 (YYLGGFAFLPFLWLVNIFW) constitute an intramembrane region (helical). At 37 to 57 (FFREAFLAPAYTEQSQIKGYV) the chain is on the cytoplasmic side. The chain crosses the membrane as a helical span at residues 58 to 78 (WRSAVGFLFWVIILATWITIF). At 79 to 101 (QIYRPRWGALGDYLSFTIPLGTP) the chain is on the lumenal side.

It belongs to the PEN-2 family. In terms of assembly, the functional gamma-secretase complex is composed of at least four polypeptides: a presenilin homodimer (PSEN1 or PSEN2), nicastrin (NCSTN), APH1 (APH1A or APH1B) and PSENEN.

It localises to the endoplasmic reticulum membrane. Its subcellular location is the golgi apparatus. It is found in the golgi stack membrane. The protein resides in the cell membrane. The protein localises to the membrane. Essential subunit of the gamma-secretase complex, an endoprotease complex that catalyzes the intramembrane cleavage of integral membrane proteins such as Notch receptors and APP (amyloid-beta precursor protein). The gamma-secretase complex plays a role in Notch and Wnt signaling cascades and regulation of downstream processes via its role in processing key regulatory proteins, and by regulating cytosolic CTNNB1 levels. PSENEN modulates both endoproteolysis of presenilin and gamma-secretase activity. The chain is Gamma-secretase subunit PEN-2 (Psenen) from Mus musculus (Mouse).